The sequence spans 202 residues: Coiled-coil domain-containing protein mdt-28 (202 aa).

Composition is skewed to acidic residues over residues 1–15 (MFEE…EEQE) and 28–45 (EDID…DDEY). Residues 1-83 (MFEELDAEDG…NEDDEEPIEP (83 aa)) form a disordered region. Residues 159-184 (IEEENLDEAIERQETIIAAAREMLNS) adopt a coiled-coil conformation.

As to quaternary structure, interacts with mdt-6 and mdt-30. Ubiquitously expressed in tissues including epidermal, intestinal, pharyngeal and uterine, and is also expressed in vulval muscle cells and gut granules.

The protein resides in the nucleus. Its subcellular location is the cytoplasm. Plays a role in normal growth and development. The protein is Coiled-coil domain-containing protein mdt-28 of Caenorhabditis elegans.